The following is a 106-amino-acid chain: MKAKRSHQAVIMSTSLRVSPSIHGYHFDTASRKKAVGNIFENTDQESLERLFRNSGDKKAEERAKIIFAIDQDVEEKTRALMALKKRTKDKLFQFLKLRKYSIKVH.

As to quaternary structure, monomer. Interacts with NOTCH2 (via ANK repeats), the interaction inhibits the nuclear translocation of NOTCH2 N2ICD. Interacts (C-terminus) with CBY1 (C-terminus), TCIM competes with CTNNB1 for the interaction with CBY1. Ubiquitous. Expressed in thyroid papillary carcinoma. Expressed in liver, expression levels decrease in hepatocellular carcinoma. Slightly detected in normal lung, its expression is highly induced in lung cancer cells (at protein level).

The protein localises to the cytoplasm. Its subcellular location is the nucleus. The protein resides in the nucleolus. It is found in the nucleus speckle. In terms of biological role, seems to be involved in the regulation of cell growth an differentiation, may play different and opposite roles depending on the tissue or cell type. May enhance the WNT-CTNNB1 pathway by relieving antagonistic activity of CBY1. Enhances the proliferation of follicular dendritic cells. Plays a role in the mitogen-activated MAPK2/3 signaling pathway, positively regulates G1-to-S-phase transition of the cell cycle. In endothelial cells, enhances key inflammatory mediators and inflammatory response through the modulation of NF-kappaB transcriptional regulatory activity. Involved in the regulation of heat shock response, seems to play a positive feedback with HSF1 to modulate heat-shock downstream gene expression. Plays a role in the regulation of hematopoiesis even if the mechanisms are unknown. In cancers such as thyroid or lung cancer, it has been described as promoter of cell proliferation, G1-to-S-phase transition and inhibitor of apoptosis. However, it negatively regulates self-renewal of liver cancer cells via suppresion of NOTCH2 signaling. In Homo sapiens (Human), this protein is Transcriptional and immune response regulator.